The following is a 441-amino-acid chain: 3-phosphoshikimate 1-carboxyvinyltransferase (441 aa).

The tract at residues 1 to 21 is disordered; that stretch reads MSANGPSHPARELKAGGSLSG. 3-phosphoshikimate is bound by residues lysine 29, serine 30, and arginine 34. Lysine 29 serves as a coordination point for phosphoenolpyruvate. Positions 103 and 132 each coordinate phosphoenolpyruvate. 3-phosphoshikimate is bound by residues serine 177, glutamine 179, aspartate 328, and lysine 355. Glutamine 179 lines the phosphoenolpyruvate pocket. Aspartate 328 acts as the Proton acceptor in catalysis. 2 residues coordinate phosphoenolpyruvate: arginine 359 and arginine 401.

It belongs to the EPSP synthase family. Monomer.

It localises to the cytoplasm. It catalyses the reaction 3-phosphoshikimate + phosphoenolpyruvate = 5-O-(1-carboxyvinyl)-3-phosphoshikimate + phosphate. It functions in the pathway metabolic intermediate biosynthesis; chorismate biosynthesis; chorismate from D-erythrose 4-phosphate and phosphoenolpyruvate: step 6/7. Catalyzes the transfer of the enolpyruvyl moiety of phosphoenolpyruvate (PEP) to the 5-hydroxyl of shikimate-3-phosphate (S3P) to produce enolpyruvyl shikimate-3-phosphate and inorganic phosphate. This is 3-phosphoshikimate 1-carboxyvinyltransferase from Parasynechococcus marenigrum (strain WH8102).